Reading from the N-terminus, the 70-residue chain is uncharacterized protein (70 aa).

This is an uncharacterized protein from Torque teno tamarin virus (isolate So-TTV2).